The primary structure comprises 197 residues: Histone chaperone asf1b-B (197 aa).

This sequence belongs to the ASF1 family. Interacts with histone H3 and histone H4.

Its subcellular location is the nucleus. Its function is as follows. Histone chaperone that facilitates histone deposition and histone exchange and removal during nucleosome assembly and disassembly. This is Histone chaperone asf1b-B (asf1bb) from Danio rerio (Zebrafish).